Here is a 2729-residue protein sequence, read N- to C-terminus: 3-methylorcinaldehyde synthase (2729 aa).

The N-terminal acylcarrier protein transacylase domain (SAT) stretch occupies residues Leu99–Leu238. Residues Ser361–Gly373 show a composition bias toward polar residues. The interval Ser361–His391 is disordered. The 432-residue stretch at Asp397 to Gln828 folds into the Ketosynthase family 3 (KS3) domain. Catalysis depends on for beta-ketoacyl synthase activity residues Cys571, His706, and His748. Residues Phe942–Val1230 form a malonyl-CoA:ACP transacylase (MAT) domain region. Catalysis depends on Ser1029, which acts as the For acyl/malonyl transferase activity. The tract at residues Glu1345–Asp1479 is N-terminal hotdog fold. Residues Glu1345–Glu1669 form the PKS/mFAS DH domain. The tract at residues Lys1374–Arg1665 is product template (PT) domain. His1380 serves as the catalytic Proton acceptor; for dehydratase activity. The segment at Asp1513–Glu1669 is C-terminal hotdog fold. Asp1575 (proton donor; for dehydratase activity) is an active-site residue. Residues Ala1682–Ala1701 show a composition bias toward low complexity. Residues Ala1682–Gly1726 are disordered. A compositionally biased stretch (polar residues) spans Thr1707 to Gly1716. In terms of domain architecture, Carrier spans Gln1750–Leu1824. At Ser1784 the chain carries O-(pantetheine 4'-phosphoryl)serine. A compositionally biased stretch (low complexity) spans Thr1835–Ser1868. The segment at Thr1835 to Met1874 is disordered. Positions Glu2086–Thr2254 are methyltransferase (C-MeT) domain. The interval Ile2344 to Arg2599 is reductase (R) domain.

The protein operates within secondary metabolite biosynthesis; terpenoid biosynthesis. Its function is as follows. Non-reducing polyketide synthase; part of the gene cluster that mediates the biosynthesis of xenovulene A, an unusual meroterpenoid that has potent inhibitory effects on the human gamma-aminobutyrate A (GABAA) benzodiazepine receptor. The first step of xenovulene A biosynthesis is the biosynthesis of 3-methylorcinaldehyde performed by the non-reducing polyketide synthase aspks1. The salicylate hydroxylase asL1 then catalyzes the oxidative dearomatization of 3-methylorcinaldehyde to yield a dearomatized hydroxycyclohexadione. The 2-oxoglutarate-dependent dioxygenase asL3 further catalyzes the oxidative ring expansion to provide the first tropolone metabolite. The cytochrome P450 monooxygenase asR2 allows the synthesis of tropolone hemiacetal. In parallel, a previously unrecognised class of terpene cyclase, asR6, produces alpha-humulene from farnesylpyrophosphate (FPP). The putative Diels-Alderase asR5 probably catalyzes the formation of the tropolone-humulene skeleton by linking humulene and the polyketide moiety. Oxidative-ring contractions catalyzed by asL4 and asL6 then processively remove carbon atoms from the polyketide to yield xenovulene A. The protein is 3-methylorcinaldehyde synthase of Sarocladium schorii (Acremonium strictum (strain IMI 501407)).